A 541-amino-acid chain; its full sequence is Catalase (541 aa).

Residues 1-20 (MPQTKGKPHEEQLEQYKNSQ) are disordered. Catalysis depends on residues His-74 and Asn-147. Tyr-357 is a binding site for heme.

It belongs to the catalase family. It depends on heme as a cofactor.

Its subcellular location is the peroxisome matrix. It carries out the reaction 2 H2O2 = O2 + 2 H2O. Functionally, catalyzes the degradation of hydrogen peroxide (H(2)O(2)) generated by peroxisomal oxidases to water and oxygen, thereby protecting cells from the toxic effects of hydrogen peroxide. This is Catalase (CAT) from Ascaris suum (Pig roundworm).